A 476-amino-acid polypeptide reads, in one-letter code: Lactate utilization protein B (476 aa).

2 consecutive 4Fe-4S ferredoxin-type domains span residues 304–334 (GTEFQSVLQCIRCAACINVCPVYRHVGGHSY) and 353–382 (YDEYKELPYASSLCAACTEACPVKIPLHEL). Residues cysteine 313, cysteine 316, cysteine 319, cysteine 323, cysteine 366, cysteine 369, and cysteine 373 each coordinate [4Fe-4S] cluster.

The protein belongs to the LutB/YkgF family.

Functionally, is involved in L-lactate degradation and allows cells to grow with lactate as the sole carbon source. Has probably a role as an electron transporter during oxidation of L-lactate. The chain is Lactate utilization protein B from Bacillus velezensis (strain DSM 23117 / BGSC 10A6 / LMG 26770 / FZB42) (Bacillus amyloliquefaciens subsp. plantarum).